The sequence spans 91 residues: Putative protein p22 (91 aa).

The polypeptide is Putative protein p22 (22) (Escherichia coli (Bacteriophage APSE-1)).